Consider the following 263-residue polypeptide: Histidine racemase (263 aa).

Residue cysteine 67 is the Proton acceptor of the active site. Cysteine 209 functions as the Proton donor in the catalytic mechanism.

Belongs to the histidine racemase family. As to quaternary structure, homodimer.

It carries out the reaction L-histidine = D-histidine. Cofactor-independent isomerase that catalyzes the reversible conversion of L-histidine to D-histidine. May play a role in growth of F.nucleatum. In Fusobacterium nucleatum subsp. nucleatum (strain ATCC 23726 / VPI 4351), this protein is Histidine racemase.